The sequence spans 453 residues: Carbamoyl phosphate synthase arginine-specific small chain (453 aa).

The transit peptide at 1–28 (MFARVFKAMPARAPAFTSVNASIQSRFM) directs the protein to the mitochondrion. The Glutamine amidotransferase type-1 domain maps to 219–406 (HVAVIDCGVK…LDSVVKYKNH (188 aa)). Cys295 serves as the catalytic Nucleophile. Active-site residues include His379 and Glu381.

Belongs to the CarA family. As to quaternary structure, heterodimer composed of 2 chains; the small (or glutamine) chain promotes the hydrolysis of glutamine to ammonia, which is used by the large (or ammonia) chain to synthesize carbamoyl phosphate.

It is found in the mitochondrion matrix. It catalyses the reaction hydrogencarbonate + L-glutamine + 2 ATP + H2O = carbamoyl phosphate + L-glutamate + 2 ADP + phosphate + 2 H(+). The enzyme catalyses L-glutamine + H2O = L-glutamate + NH4(+). It functions in the pathway amino-acid biosynthesis; L-arginine biosynthesis; carbamoyl phosphate from bicarbonate: step 1/1. In terms of biological role, small subunit of the arginine-specific carbamoyl phosphate synthase (CPSase). CPSase catalyzes the formation of carbamoyl phosphate from the ammonia moiety of glutamine, carbonate, and phosphate donated by ATP, the first step of the arginine biosynthetic pathway. The small subunit (glutamine amidotransferase) binds and cleaves glutamine to supply the large subunit with the substrate ammonia. The protein is Carbamoyl phosphate synthase arginine-specific small chain (cpa1) of Aspergillus niger (strain ATCC MYA-4892 / CBS 513.88 / FGSC A1513).